Reading from the N-terminus, the 370-residue chain is Biotin synthase (370 aa).

The Radical SAM core domain maps to 56 to 283; the sequence is NAVQVSTLLS…KSHVRLSAGR (228 aa). [4Fe-4S] cluster is bound by residues cysteine 71, cysteine 75, and cysteine 78. [2Fe-2S] cluster contacts are provided by cysteine 115, cysteine 146, cysteine 206, and arginine 278. Residues 327–344 show a composition bias toward basic and acidic residues; sequence GLHPEPSDPHADDAHRDD. Positions 327–346 are disordered; it reads GLHPEPSDPHADDAHRDDEQ.

Belongs to the radical SAM superfamily. Biotin synthase family. As to quaternary structure, homodimer. [4Fe-4S] cluster serves as cofactor. [2Fe-2S] cluster is required as a cofactor.

It carries out the reaction (4R,5S)-dethiobiotin + (sulfur carrier)-SH + 2 reduced [2Fe-2S]-[ferredoxin] + 2 S-adenosyl-L-methionine = (sulfur carrier)-H + biotin + 2 5'-deoxyadenosine + 2 L-methionine + 2 oxidized [2Fe-2S]-[ferredoxin]. It functions in the pathway cofactor biosynthesis; biotin biosynthesis; biotin from 7,8-diaminononanoate: step 2/2. Its function is as follows. Catalyzes the conversion of dethiobiotin (DTB) to biotin by the insertion of a sulfur atom into dethiobiotin via a radical-based mechanism. The polypeptide is Biotin synthase (Chromohalobacter salexigens (strain ATCC BAA-138 / DSM 3043 / CIP 106854 / NCIMB 13768 / 1H11)).